The chain runs to 446 residues: T-box transcription factor TBX19 (446 aa).

Residues 43–216 (LEDAPLWQRF…YNPFAKAFLD (174 aa)) constitute a DNA-binding region (T-box).

Its subcellular location is the nucleus. Functionally, transcriptional regulator involved in developmental processes. Can activate POMC gene expression and repress the alpha glycoprotein subunit and thyroid-stimulating hormone beta promoters. In Mus musculus (Mouse), this protein is T-box transcription factor TBX19.